A 187-amino-acid polypeptide reads, in one-letter code: Ribosome maturation factor RimM (187 aa).

The PRC barrel domain occupies 111-187; it reads KDEYYWVDLI…RILVDWQADF (77 aa).

Belongs to the RimM family. As to quaternary structure, binds ribosomal protein uS19.

The protein resides in the cytoplasm. Its function is as follows. An accessory protein needed during the final step in the assembly of 30S ribosomal subunit, possibly for assembly of the head region. Essential for efficient processing of 16S rRNA. May be needed both before and after RbfA during the maturation of 16S rRNA. It has affinity for free ribosomal 30S subunits but not for 70S ribosomes. This Albidiferax ferrireducens (strain ATCC BAA-621 / DSM 15236 / T118) (Rhodoferax ferrireducens) protein is Ribosome maturation factor RimM.